Consider the following 130-residue polypeptide: DUF35 domain-containing scaffold protein (130 aa).

Zn(2+) is bound by residues cysteine 20, cysteine 23, cysteine 34, and cysteine 37.

The protein belongs to the scaffold protein DUF35 family. As to quaternary structure, interacts with acetoacetyl-CoA thiolase and HMG-CoA synthase (HMGCS) that catalyzes the first and second step in the mevalonate pathway, respectively.

Functionally, functions as a scaffold to connect the acetoacetyl-CoA thiolase and HMG-CoA synthase (HMGCS) dimers in the channeling thiolase/HMGCS complex, which allows for efficient coupling of the endergonic thiolase reaction with the exergonic HMGCS reaction. This Methanothermococcus thermolithotrophicus (Methanococcus thermolithotrophicus) protein is DUF35 domain-containing scaffold protein.